We begin with the raw amino-acid sequence, 267 residues long: MPKVTKIEVQKKNKERFNLYLDESFEMGIDMDTLVHFNLKKGDVLTAANMEDIQKYEHFRFGLHLAIQYLSYRKRTEQEVVQHLQKHEISESAIAEVIDYCNREGYIDHEDYAESLKNTMIRTTDKGPEIFRQKLIKAGIEKSLVENYTAKYEEEQPLEDVEILADKLLHQKKGPKKKRIDKVKQSLLQKGYSFEVINEAMQNLDFEPDSEEIDLLLQRELEKVFRKYERKYEGRQLEMKTIEALLRKGYEYDTIKDKMRESGIGDE.

It belongs to the RecX family.

Its subcellular location is the cytoplasm. In terms of biological role, modulates RecA activity. This is Regulatory protein RecX from Staphylococcus carnosus (strain TM300).